Reading from the N-terminus, the 682-residue chain is Protein asunder (682 aa).

Positions 517–570 (NGARLKLSKAKDQYRLLYRELEQLIHLNATTVHHKNLLESLQSLRAAYGEAKSE) form a coiled coil. Over residues 571–583 (PNSSLLRSYTESP) the composition is skewed to polar residues. Residues 571–612 (PNSSLLRSYTESPHSPERLEPIPSGGSSGSNSNSLLKASKRR) are disordered. A Nuclear localization signal (NLS) motif is present at residues 606 to 612 (LKASKRR).

The protein belongs to the Integrator subunit 13 family. Belongs to the multiprotein complex Integrator, at least composed of IntS1, IntS2, IntS3, IntS4, omd/IntS5, IntS6, defl/IntS7, IntS8, IntS9, IntS10, IntS11, IntS12, asun/IntS13, IntS14 and IntS15. The core complex associates with protein phosphatase 2A subunits mts/PP2A and Pp2A-29B, to form the Integrator-PP2A (INTAC) complex. Phosphorylated.

It is found in the nucleus. It localises to the cytoplasm. The protein localises to the perinuclear region. In terms of biological role, component of the integrator complex, a multiprotein complex that terminates RNA polymerase II (Pol II) transcription in the promoter-proximal region of genes. The integrator complex provides a quality checkpoint during transcription elongation by driving premature transcription termination of transcripts that are unfavorably configured for transcriptional elongation: the complex terminates transcription by (1) catalyzing dephosphorylation of the C-terminal domain (CTD) of Pol II subunit Polr2A/Rbp1 and Spt5, and (2) degrading the exiting nascent RNA transcript via endonuclease activity. The integrator complex is also involved in the 3'-end processing of the U7 snRNA, and also the spliceosomal snRNAs U1, U2, U4 and U5. This Drosophila ananassae (Fruit fly) protein is Protein asunder (asun).